Here is a 283-residue protein sequence, read N- to C-terminus: Protein/nucleic acid deglycase HchA (283 aa).

His86, Glu91, and His123 together coordinate Zn(2+). The active-site Nucleophile is Cys185.

It belongs to the peptidase C56 family. HchA subfamily. As to quaternary structure, homodimer.

It is found in the cytoplasm. The enzyme catalyses N(omega)-(1-hydroxy-2-oxopropyl)-L-arginyl-[protein] + H2O = lactate + L-arginyl-[protein] + H(+). It catalyses the reaction N(6)-(1-hydroxy-2-oxopropyl)-L-lysyl-[protein] + H2O = lactate + L-lysyl-[protein] + H(+). The catalysed reaction is S-(1-hydroxy-2-oxopropyl)-L-cysteinyl-[protein] + H2O = lactate + L-cysteinyl-[protein] + H(+). It carries out the reaction N(omega)-(1-hydroxy-2-oxoethyl)-L-arginyl-[protein] + H2O = L-arginyl-[protein] + glycolate + H(+). The enzyme catalyses N(6)-(1-hydroxy-2-oxoethyl)-L-lysyl-[protein] + H2O = glycolate + L-lysyl-[protein] + H(+). It catalyses the reaction S-(1-hydroxy-2-oxoethyl)-L-cysteinyl-[protein] + H2O = glycolate + L-cysteinyl-[protein] + H(+). The catalysed reaction is N(2)-(1-hydroxy-2-oxopropyl)-dGTP + H2O = lactate + dGTP + H(+). It carries out the reaction N(2)-(1-hydroxy-2-oxopropyl)-GTP + H2O = lactate + GTP + H(+). The enzyme catalyses N(2)-(1-hydroxy-2-oxopropyl)-GDP + H2O = lactate + GDP + H(+). It catalyses the reaction N(2)-(1-hydroxy-2-oxopropyl)-GMP + H2O = lactate + GMP + H(+). The catalysed reaction is N(2)-(1-hydroxy-2-oxoethyl)-dGTP + H2O = dGTP + glycolate + H(+). It carries out the reaction N(2)-(1-hydroxy-2-oxoethyl)-GTP + H2O = glycolate + GTP + H(+). The enzyme catalyses N(2)-(1-hydroxy-2-oxoethyl)-GDP + H2O = glycolate + GDP + H(+). It catalyses the reaction N(2)-(1-hydroxy-2-oxoethyl)-GMP + H2O = glycolate + GMP + H(+). The catalysed reaction is an N(2)-(1-hydroxy-2-oxopropyl)-guanosine in RNA + H2O = a guanosine in RNA + lactate + H(+). It carries out the reaction an N(2)-(1-hydroxy-2-oxopropyl)-2'-deoxyguanosine in DNA + H2O = a 2'-deoxyguanosine in DNA + lactate + H(+). The enzyme catalyses an N(2)-(1-hydroxy-2-oxoethyl)-guanosine in RNA + H2O = a guanosine in RNA + glycolate + H(+). It catalyses the reaction an N(2)-(1-hydroxy-2-oxoethyl)-2'-deoxyguanosine in DNA + H2O = a 2'-deoxyguanosine in DNA + glycolate + H(+). Protein and nucleotide deglycase that catalyzes the deglycation of the Maillard adducts formed between amino groups of proteins or nucleotides and reactive carbonyl groups of glyoxals. Thus, functions as a protein deglycase that repairs methylglyoxal- and glyoxal-glycated proteins, and releases repaired proteins and lactate or glycolate, respectively. Deglycates cysteine, arginine and lysine residues in proteins, and thus reactivates these proteins by reversing glycation by glyoxals. Acts on early glycation intermediates (hemithioacetals and aminocarbinols), preventing the formation of Schiff bases and advanced glycation endproducts (AGE). Also functions as a nucleotide deglycase able to repair glycated guanine in the free nucleotide pool (GTP, GDP, GMP, dGTP) and in DNA and RNA. Is thus involved in a major nucleotide repair system named guanine glycation repair (GG repair), dedicated to reversing methylglyoxal and glyoxal damage via nucleotide sanitization and direct nucleic acid repair. Plays an important role in protecting cells from carbonyl stress. The chain is Protein/nucleic acid deglycase HchA from Escherichia coli O157:H7.